A 406-amino-acid chain; its full sequence is MANPKLVLAYSGGLDTSVAIKWLQERGYDVIACCLDLGEGKDLDFVKEKALKVGAIKSYVIDVKDEFANEYALIALQANALYEGKYPLVSALSRPLIAKKLVEIAELEGAVAVAHGCTGKGNDQVRFEVSIKALNPDLDVIAPVREWSWSREEEIEYAKKHGIPIPVDLDSPFSIDQNLWGRSNECGILEDPWAAPPEEAYELTASLENAPDVPDVIEIGFEQGVPVTLNGKAYPLAQMILELNAIAGKHGVGRIDHVENRLVGIKSREVYECPGAMTLIKAHKELEDLTLVREVAHFKPLIEQKIAEVIYNGLWFSPLKDALVAFLKETQKNVTGVVRVKLFKGHAIVEGRKSPFSLYDEKLATYTSEDEFDHQAAVGFISLYGLPTKVNSIVNKQNKSSVSTGQ.

Position 9 to 17 (9 to 17 (AYSGGLDTS)) interacts with ATP. L-citrulline is bound at residue Tyr86. Gly116 lines the ATP pocket. Positions 118, 122, and 123 each coordinate L-aspartate. L-citrulline is bound at residue Asn122. L-citrulline-binding residues include Arg126, Ser174, Ser183, Glu259, and Tyr271.

This sequence belongs to the argininosuccinate synthase family. Type 1 subfamily. Homotetramer.

The protein resides in the cytoplasm. The enzyme catalyses L-citrulline + L-aspartate + ATP = 2-(N(omega)-L-arginino)succinate + AMP + diphosphate + H(+). The protein operates within amino-acid biosynthesis; L-arginine biosynthesis; L-arginine from L-ornithine and carbamoyl phosphate: step 2/3. This chain is Argininosuccinate synthase, found in Geobacillus thermodenitrificans (strain NG80-2).